We begin with the raw amino-acid sequence, 444 residues long: Probable polygalacturonase At1g80170 (444 aa).

Residues 1–28 (MSYSRGGTLVTLLLLLVVASSLALTANA) form the signal peptide. PbH1 repeat units lie at residues 208-234 (CRRV…HISV), 235-256 (SRGI…SIVK), 258-278 (STQI…SIGS), 288-309 (VRDI…RIKT), 317-338 (VSKI…IIDQ), and 351-378 (TSAI…KISC). Residue aspartate 249 is the Proton donor of the active site. Histidine 272 is a catalytic residue.

Belongs to the glycosyl hydrolase 28 family. As to expression, expressed in young, mature and dehiscing anthers. Found in stems, but not in roots or in abscission zone of floral organs.

It is found in the secreted. The protein localises to the cell wall. It catalyses the reaction (1,4-alpha-D-galacturonosyl)n+m + H2O = (1,4-alpha-D-galacturonosyl)n + (1,4-alpha-D-galacturonosyl)m.. The sequence is that of Probable polygalacturonase At1g80170 from Arabidopsis thaliana (Mouse-ear cress).